The chain runs to 196 residues: Large ribosomal subunit protein mL66 (196 aa).

The N-terminal 34 residues, 1–34 (MAALRRLVSGCGRQLQAFLAGPAATGWLWLPARG), are a transit peptide targeting the mitochondrion.

This sequence belongs to the bacterial ribosomal protein bS18 family. Mitochondrion-specific ribosomal protein mL66 subfamily. Component of the mitochondrial ribosome small subunit (28S) which comprises a 12S rRNA and about 30 distinct proteins.

The protein resides in the mitochondrion. This Mus musculus (Mouse) protein is Large ribosomal subunit protein mL66 (Mrps18a).